A 508-amino-acid polypeptide reads, in one-letter code: Zinc finger CCCH-type with G patch domain-containing protein (508 aa).

Residues 67–86 (QQESSHHDSGTPETDTKTSV) form a disordered region. The segment covering 69 to 86 (ESSHHDSGTPETDTKTSV) has biased composition (basic and acidic residues). A C3H1-type zinc finger spans residues 161–188 (RSMVPCPYFLEGKCKFAGAECRFSHGYL). The tract at residues 253–282 (IYPLGPEEVESDSESDSQSDTGDSSSSKAA) is disordered. Over residues 259-269 (EEVESDSESDS) the composition is skewed to acidic residues. Positions 270–279 (QSDTGDSSSS) are enriched in low complexity. The 47-residue stretch at 310–356 (TKGIGSKLMAKMGYIFGKGLGKDGEGRVEPIEVVVLPQGKSLDKCAE) folds into the G-patch domain. The interval 404-426 (SLHDLRVSHPGAKPDIRKTRKSA) is disordered.

It localises to the nucleus. Its function is as follows. Transcription repressor. This Nematostella vectensis (Starlet sea anemone) protein is Zinc finger CCCH-type with G patch domain-containing protein.